Here is a 364-residue protein sequence, read N- to C-terminus: MSKPVNLVLLYGGKSGEHEVSLVSAASVLKHLDSEKYHIIPIAMDKSGRFHRHDYNDLLACSDKLPVVTEKSTPLEGLLINGRLAVDAEIVFPVVHGPLYEDGCLQGLLELAGVAYVGCDVLSSAIGMDKDMARRLACINGLKSARYKLLSWHANASERQQFCHEVASEFGWPLFVKPCSLGSSVGIHKANNMDELNAAVADALRYDEEILVEEFIVGREIELAVLENSIPCGKPRVSMVGEIKVNHPDGYYSYTAKYLESSQTDLIIPAQLNNSLEEQLKQAAANIFSYLKCKGMARVDFFVNDKTEEIYFNEINTLPGFTSISMYPKLWQATGVAYPDLLDELINLAMVHHNCRQHLVTNYL.

Residues R134–N347 enclose the ATP-grasp domain. A167–E222 provides a ligand contact to ATP. The Mg(2+) site is built by D300, E314, and N316.

Belongs to the D-alanine--D-alanine ligase family. Requires Mg(2+) as cofactor. It depends on Mn(2+) as a cofactor.

The protein resides in the cytoplasm. It carries out the reaction 2 D-alanine + ATP = D-alanyl-D-alanine + ADP + phosphate + H(+). Its pathway is cell wall biogenesis; peptidoglycan biosynthesis. Its function is as follows. Cell wall formation. The protein is D-alanine--D-alanine ligase of Legionella pneumophila (strain Paris).